A 361-amino-acid chain; its full sequence is Histidinol-phosphate aminotransferase (361 aa).

Lys219 bears the N6-(pyridoxal phosphate)lysine mark.

This sequence belongs to the class-II pyridoxal-phosphate-dependent aminotransferase family. Histidinol-phosphate aminotransferase subfamily. As to quaternary structure, homodimer. Pyridoxal 5'-phosphate is required as a cofactor.

It catalyses the reaction L-histidinol phosphate + 2-oxoglutarate = 3-(imidazol-4-yl)-2-oxopropyl phosphate + L-glutamate. Its pathway is amino-acid biosynthesis; L-histidine biosynthesis; L-histidine from 5-phospho-alpha-D-ribose 1-diphosphate: step 7/9. This is Histidinol-phosphate aminotransferase from Acinetobacter baumannii (strain ATCC 17978 / DSM 105126 / CIP 53.77 / LMG 1025 / NCDC KC755 / 5377).